Consider the following 612-residue polypeptide: Probable serine/threonine-protein kinase WNK4 (612 aa).

A Protein kinase domain is found at 25-282; sequence IRYNEVLGRG…AKELLQDPFL (258 aa). Residues 105 to 108 and Lys-155 each bind ATP; that span reads TELF. Asp-172 serves as the catalytic Proton acceptor.

This sequence belongs to the protein kinase superfamily. Ser/Thr protein kinase family. WNK subfamily.

It catalyses the reaction L-seryl-[protein] + ATP = O-phospho-L-seryl-[protein] + ADP + H(+). It carries out the reaction L-threonyl-[protein] + ATP = O-phospho-L-threonyl-[protein] + ADP + H(+). This chain is Probable serine/threonine-protein kinase WNK4 (WNK4), found in Oryza sativa subsp. japonica (Rice).